The following is a 590-amino-acid chain: MKKSWTWTWRVPAELLLLCAALGCLCVPGSRSERPRSLEPTVVNRSLAKSRHSRSVDATPMPIDCELSSWSSWTMCDPCQKKRYRHAYLLRPSQFNGEPCNFSDKEVEDCATSRPCRSQVRCEGFVCAQTGRCVNRRLLCNGDNDCGDQSDEANCRKIYKKCHHEMEQYWAIGSLASGINLFTNSLEGPVLDHRYYAGGCNPHYILDMRFRKPYNVESYTPQTQGKYKFALAEYESYSDFERNVMEKTYSKSTFNLGFKIPSIFEFGINTESDQLMNYISRTKRFSHTKSKFLHARSALEVAHYKLKPRNLMLHYDFLQRVQRVPLEYSYGEYRDLFRDFGHHFITEAVLGGIYEYTLIMNKEAMERADYSLNDVQACAKNDFKLGAAIEEVYVSLGVSTSKCRGILNEIKDRNKRDTMVQDLVVLVRGGASEHITALAYSDLPTADLMQEWGDAVQYNPAIIKIKVEPLYELVTATDVAYSSTVKQNMRQALEEFQGEVSPCRCAPCQGNGVPVQKGSRCDCICPVGFQGSACEITSRKNVPIDGRWSCWSRWSSCSGGQKTRRRQCNNPAPQDGGSPCSGPASETLAC.

Positions 1 to 32 (MKKSWTWTWRVPAELLLLCAALGCLCVPGSRS) are cleaved as a signal peptide. Positions 33 to 54 (ERPRSLEPTVVNRSLAKSRHSR) are excised as a propeptide. N44 carries N-linked (GlcNAc...) asparagine glycosylation. Positions 64-117 (DCELSSWSSWTMCDPCQKKRYRHAYLLRPSQFNGEPCNFSDKEVEDCATSRPCR) constitute a TSP type-1 1 domain. Disulfide bonds link C65-C100, C76-C110, C79-C116, C122-C133, C127-C146, C140-C155, and C162-C200. W70 and W73 each carry a C-linked (Man) tryptophan glycan. N101 is a glycosylation site (N-linked (GlcNAc...) asparagine). An LDL-receptor class A domain is found at 120–157 (VRCEGFVCAQTGRCVNRRLLCNGDNDCGDQSDEANCRK). Residues L138, N141, D143, D145, D151, and E152 each contribute to the Ca(2+) site. Positions 158 to 504 (IYKKCHHEME…EFQGEVSPCR (347 aa)) constitute an MACPF domain. Beta stranded transmembrane passes span 252-259 (STFNLGFK), 262-269 (SIFEFGIN), 379-386 (AKNDFKLG), and 392-399 (VYVSLGVS). A disulfide bridge connects residues C378 and C403. The residue at position 418 (T418) is a Phosphothreonine. Disulfide bonds link C503-C550, C505-C521, C508-C523, and C525-C534. Residues 505 to 535 (CAPCQGNGVPVQKGSRCDCICPVGFQGSACE) enclose the EGF-like domain. The 44-residue stretch at 545–588 (DGRWSCWSRWSSCSGGQKTRRRQCNNPAPQDGGSPCSGPASETL) folds into the TSP type-1 2 domain. C-linked (Man) tryptophan glycosylation is found at W551 and W554. A disulfide bridge links C557 with C590. The segment at 557–590 (CSGGQKTRRRQCNNPAPQDGGSPCSGPASETLAC) is disordered.

It belongs to the complement C6/C7/C8/C9 family. Heterotrimer of 3 chains: alpha (C8A), beta (C8B) and gamma (C8G); the alpha and gamma chains are disulfide bonded. Component of the membrane attack complex (MAC), composed of complement C5b, C6, C7, C8A, C8B, C8G and multiple copies of the pore-forming subunit C9. Post-translationally, N-glycosylated; contains one or two bound glycans. Not O-glycosylated.

The protein localises to the secreted. The protein resides in the target cell membrane. Its activity is regulated as follows. Membrane attack complex (MAC) assembly is inhibited by CD59, thereby protecting self-cells from damage during complement activation. CD59 acts by binding to the beta-haipins of C8 (C8A and C8B), forming an intermolecular beta-sheet that prevents incorporation of the multiple copies of C9 required for complete formation of the osmolytic pore. MAC assembly is also inhibited by clusterin (CLU) chaperones that inhibit polymerization of C9. Its function is as follows. Component of the membrane attack complex (MAC), a multiprotein complex activated by the complement cascade, which inserts into a target cell membrane and forms a pore, leading to target cell membrane rupture and cell lysis. The MAC is initiated by proteolytic cleavage of C5 into complement C5b in response to the classical, alternative, lectin and GZMK complement pathways. The complement pathways consist in a cascade of proteins that leads to phagocytosis and breakdown of pathogens and signaling that strengthens the adaptive immune system. C8B, together with C8A and C8G, inserts into the target membrane, but does not form pores by itself. During MAC assembly, associates with C5b, C6 and C7 to form the C5b8 intermediate complex that inserts into the target membrane and traverses the bilayer increasing membrane rigidity. The sequence is that of Complement component C8 beta chain (C8B) from Oryctolagus cuniculus (Rabbit).